Consider the following 363-residue polypeptide: Adenosine 3'-phospho 5'-phosphosulfate transporter 2 (363 aa).

10 consecutive transmembrane segments (helical) span residues 39-59, 63-83, 106-126, 131-151, 157-177, 187-206, 231-251, 257-277, 281-301, and 310-330; these read WLQF…YGYM, IFKL…QFVI, IYGV…ASVG, PTQV…GILI, GWID…FTLA, SRGY…IGNI, VFIF…PFFL, TFGY…VVLT, VFGA…TIIL, and FTIE…LNLY.

It belongs to the nucleotide-sugar transporter family. SLC35B subfamily.

It is found in the golgi apparatus membrane. Functionally, mediates the transport of adenosine 3'-phospho 5'-phosphosulfate (PAPS), from cytosol into Golgi. PAPS is a universal sulfuryl donor for sulfation events that take place in the Golgi. This chain is Adenosine 3'-phospho 5'-phosphosulfate transporter 2 (pst-2), found in Caenorhabditis briggsae.